The primary structure comprises 270 residues: Putative hydro-lyase ACIAD2519 (270 aa).

Belongs to the D-glutamate cyclase family.

The sequence is that of Putative hydro-lyase ACIAD2519 from Acinetobacter baylyi (strain ATCC 33305 / BD413 / ADP1).